A 199-amino-acid polypeptide reads, in one-letter code: MPNYKLTYFNMRGRAEIIRYIFAYLDIQYEDHRIEQADWPEIKSTLPFGKIPILEVDGLTLHQSLAIARYLTKNTDLAGNTEMEQCHVDAIVDTLDDFMSCFPWAEKKQDVKEQMFNELLTYNAPHLMQDLDTYLGGREWLIGNSVTWADFYWEICSTTLLVFKPDLLDNHPRLVTLRKKVQAIPAVANWIKRRPQTKL.

Positions 2-79 (PNYKLTYFNM…YLTKNTDLAG (78 aa)) constitute a GST N-terminal domain. Residues tyrosine 8, arginine 14, tryptophan 39, 49–51 (GKI), and 63–64 (QS) each bind glutathione. Residues 81–199 (TEMEQCHVDA…WIKRRPQTKL (119 aa)) form the GST C-terminal domain.

Belongs to the GST superfamily. Sigma family. In terms of assembly, homodimer. Glutathione is required as a cofactor. As to expression, expressed in a number of megakaryocytic cell lines but not in platelets. Highly expressed in adipose tissue, macrophages and placenta. Also expressed at lower levels in lung, heart, lymph nodes, appendix, bone marrow and fetal liver.

It is found in the cytoplasm. It catalyses the reaction prostaglandin H2 = prostaglandin D2. The enzyme catalyses RX + glutathione = an S-substituted glutathione + a halide anion + H(+). The catalysed reaction is 2-glyceryl-prostaglandin H2 = 2-glyceryl-prostaglandin D2. With respect to regulation, prostaglandin PGD2 synthesis is stimulated by calcium and magnesium ions. One calcium or magnesium ion is bound between the subunits of the homodimer. The interactions with the protein are for the most part mediated via water molecules. Magnesium increases the affinity for glutathione, while calcium has no effect on the affinity for glutathione. Bifunctional enzyme which catalyzes both the conversion of PGH2 to PGD2, a prostaglandin involved in smooth muscle contraction/relaxation and a potent inhibitor of platelet aggregation, and the conjugation of glutathione with a wide range of aryl halides and organic isothiocyanates. Also exhibits low glutathione-peroxidase activity towards cumene hydroperoxide. This Homo sapiens (Human) protein is Hematopoietic prostaglandin D synthase.